We begin with the raw amino-acid sequence, 143 residues long: Large ribosomal subunit protein uL15 (143 aa).

Positions Met1–Phe45 are disordered. Residues Arg21–Cys31 are compositionally biased toward gly residues.

This sequence belongs to the universal ribosomal protein uL15 family. In terms of assembly, part of the 50S ribosomal subunit.

In terms of biological role, binds to the 23S rRNA. The polypeptide is Large ribosomal subunit protein uL15 (Chromobacterium violaceum (strain ATCC 12472 / DSM 30191 / JCM 1249 / CCUG 213 / NBRC 12614 / NCIMB 9131 / NCTC 9757 / MK)).